Reading from the N-terminus, the 542-residue chain is Excitatory amino acid transporter 1 (542 aa).

Over 1–47 (MTKSNGEEPKMGGRMERFQQGVRKRTLLAKKKVQNITKEDVKSYLFR) the chain is Cytoplasmic. A helical transmembrane segment spans residues 48 to 68 (NAFVLLTVTAVIVGTILGFTL). The Extracellular portion of the chain corresponds to 69-86 (RPYRMSYREVKYFSFPGE). The helical transmembrane segment at 87–108 (LLMRMLQMLVLPLIISSLVTGM) threads the bilayer. The Cytoplasmic portion of the chain corresponds to 109–122 (AALDSKASGKMGMR). The helical transmembrane segment at 123-145 (AVVYYMTTTIIAVVIGIIIVIII) threads the bilayer. Residues 146–236 (HPGKGTKENM…ITEELVPVPG (91 aa)) are Extracellular-facing. Residues 237 to 260 (SVNGVNALGLVVFSMCFGFVIGNM) form a helical membrane-spanning segment. Topologically, residues 261–269 (KEQGQALRE) are cytoplasmic. Residues 270 to 297 (FFDSLNEAIMRLVAVIMWYAPVGILFLI) traverse the membrane as a helical segment. Residues 298–318 (AGKIVEMEDMGVIGGQLAMYT) lie on the Extracellular side of the membrane. A helical transmembrane segment spans residues 319–340 (VTVIVGLLIHAVIVLPLLYFLV). Over 341–345 (TRKNP) the chain is Cytoplasmic. The segment at residues 346 to 376 (WVFIGGLLQALITALGTSSSSATLPITFKCL) is an intramembrane region (discontinuously helical). Residue 363 to 365 (SSS) participates in L-aspartate binding. At 377-385 (EENNGVDKR) the chain is on the cytoplasmic side. The chain crosses the membrane as a helical span at residues 386 to 412 (VTRFVLPVGATINMDGTALYEALAAIF). Positions 394, 396, and 398 each coordinate Na(+). L-aspartate is bound at residue Thr-402. Residues 413-425 (IAQVNNFELNFGQ) are Extracellular-facing. Positions 426-459 (IITISITATAASIGAAGIPQAGLVTMVIVLTSVG) form an intramembrane region, discontinuously helical. Position 443–447 (443–447 (IPQAG)) interacts with L-aspartate. The Extracellular segment spans residues 460-472 (LPTDDITLIIAVD). The helical transmembrane segment at 473 to 494 (WFLDRLRTTTNVLGDSLGAGIV) threads the bilayer. L-aspartate contacts are provided by Asp-476 and Asn-483. 2 residues coordinate Na(+): Asn-483 and Asp-487. Residues 495–542 (EHLSRHELKNRDVEMGNSVIEENEMKKPYQLIAQDNETEKPIDSETKM) lie on the Cytoplasmic side of the membrane. Position 512 is a phosphoserine (Ser-512).

Belongs to the dicarboxylate/amino acid:cation symporter (DAACS) (TC 2.A.23) family. SLC1A3 subfamily. As to quaternary structure, homotrimer. Glycosylated. In terms of tissue distribution, detected in brain. Detected at very much lower levels in heart, lung, placenta and skeletal muscle. Highly expressed in cerebellum, but also found in frontal cortex, hippocampus and basal ganglia.

It localises to the cell membrane. It carries out the reaction K(+)(in) + L-glutamate(out) + 3 Na(+)(out) + H(+)(out) = K(+)(out) + L-glutamate(in) + 3 Na(+)(in) + H(+)(in). The catalysed reaction is K(+)(in) + L-aspartate(out) + 3 Na(+)(out) + H(+)(out) = K(+)(out) + L-aspartate(in) + 3 Na(+)(in) + H(+)(in). The enzyme catalyses D-aspartate(out) + K(+)(in) + 3 Na(+)(out) + H(+)(out) = D-aspartate(in) + K(+)(out) + 3 Na(+)(in) + H(+)(in). Functionally, sodium-dependent, high-affinity amino acid transporter that mediates the uptake of L-glutamate and also L-aspartate and D-aspartate. Functions as a symporter that transports one amino acid molecule together with two or three Na(+) ions and one proton, in parallel with the counter-transport of one K(+) ion. Mediates Cl(-) flux that is not coupled to amino acid transport; this avoids the accumulation of negative charges due to aspartate and Na(+) symport. Plays a redundant role in the rapid removal of released glutamate from the synaptic cleft, which is essential for terminating the postsynaptic action of glutamate. This chain is Excitatory amino acid transporter 1, found in Homo sapiens (Human).